Reading from the N-terminus, the 141-residue chain is ATP synthase epsilon chain (141 aa).

This sequence belongs to the ATPase epsilon chain family. In terms of assembly, F-type ATPases have 2 components, CF(1) - the catalytic core - and CF(0) - the membrane proton channel. CF(1) has five subunits: alpha(3), beta(3), gamma(1), delta(1), epsilon(1). CF(0) has three main subunits: a, b and c.

The protein localises to the cell inner membrane. Functionally, produces ATP from ADP in the presence of a proton gradient across the membrane. The protein is ATP synthase epsilon chain of Dechloromonas aromatica (strain RCB).